Reading from the N-terminus, the 132-residue chain is Large ribosomal subunit protein bL19 (132 aa).

It belongs to the bacterial ribosomal protein bL19 family.

Its function is as follows. This protein is located at the 30S-50S ribosomal subunit interface and may play a role in the structure and function of the aminoacyl-tRNA binding site. This Nitrosomonas europaea (strain ATCC 19718 / CIP 103999 / KCTC 2705 / NBRC 14298) protein is Large ribosomal subunit protein bL19.